A 508-amino-acid chain; its full sequence is Photosystem II CP47 reaction center protein (508 aa).

Helical transmembrane passes span 21-36 (SVHI…WAGS), 101-115 (IVFS…IWHW), 140-156 (GIHL…FGAF), 203-218 (IAAG…FHLS), 237-252 (VLSS…AFVV), and 457-472 (SFAL…HGAR).

It belongs to the PsbB/PsbC family. PsbB subfamily. In terms of assembly, PSII is composed of 1 copy each of membrane proteins PsbA, PsbB, PsbC, PsbD, PsbE, PsbF, PsbH, PsbI, PsbJ, PsbK, PsbL, PsbM, PsbT, PsbX, PsbY, PsbZ, Psb30/Ycf12, at least 3 peripheral proteins of the oxygen-evolving complex and a large number of cofactors. It forms dimeric complexes. Binds multiple chlorophylls. PSII binds additional chlorophylls, carotenoids and specific lipids. is required as a cofactor.

The protein resides in the plastid. Its subcellular location is the chloroplast thylakoid membrane. One of the components of the core complex of photosystem II (PSII). It binds chlorophyll and helps catalyze the primary light-induced photochemical processes of PSII. PSII is a light-driven water:plastoquinone oxidoreductase, using light energy to abstract electrons from H(2)O, generating O(2) and a proton gradient subsequently used for ATP formation. In Nuphar advena (Common spatterdock), this protein is Photosystem II CP47 reaction center protein.